A 378-amino-acid polypeptide reads, in one-letter code: Acid phosphatase-like protein XcAP-2 (378 aa).

Positions Met-1–Ala-19 are cleaved as a signal peptide. Disulfide bonds link Cys-147/Cys-374, Cys-168/Cys-220, and Cys-347/Cys-351.

It belongs to the histidine acid phosphatase family.

It is found in the secreted. In terms of biological role, probably modulates blood feeding of fleas on vertebrate species by binding and sequestering different mediators involved in the host response. Binds histamine. Binds leukotriene B4, leukotriene C4, leukotriene D4 and leukotriene E4. Does not bind serotonin, adrenaline, noradrenaline, ADP, and stable analogs of thromboxane A2: U-46619 and cTXA2. This is Acid phosphatase-like protein XcAP-2 from Xenopsylla cheopis (Oriental rat flea).